Consider the following 40-residue polypeptide: Photosystem II reaction center protein J (40 aa).

Residues 8–28 (IPLWLIGTVTGIIVIGLLGIF) traverse the membrane as a helical segment.

Belongs to the PsbJ family. PSII is composed of 1 copy each of membrane proteins PsbA, PsbB, PsbC, PsbD, PsbE, PsbF, PsbH, PsbI, PsbJ, PsbK, PsbL, PsbM, PsbT, PsbX, PsbY, PsbZ, Psb30/Ycf12, at least 3 peripheral proteins of the oxygen-evolving complex and a large number of cofactors. It forms dimeric complexes.

It is found in the plastid. The protein localises to the chloroplast thylakoid membrane. One of the components of the core complex of photosystem II (PSII). PSII is a light-driven water:plastoquinone oxidoreductase that uses light energy to abstract electrons from H(2)O, generating O(2) and a proton gradient subsequently used for ATP formation. It consists of a core antenna complex that captures photons, and an electron transfer chain that converts photonic excitation into a charge separation. The sequence is that of Photosystem II reaction center protein J from Pinus koraiensis (Korean pine).